The chain runs to 614 residues: Zinc finger and SCAN domain-containing protein 2 (614 aa).

3 disordered regions span residues 1–25 (MAAE…EDEQ), 42–73 (AVLQ…EGPQ), and 162–200 (NISG…RVVP). Positions 69-127 (AEGPQGALVRFRELCRRWLRPEVHTKEQMLTVLPREIQAWLQEHRPESSEEAVALVEDL) constitute an SCAN box domain. 14 consecutive C2H2-type zinc fingers follow at residues 222–244 (YECP…ERTH), 250–272 (YKCD…QTTH), 278–300 (YKCR…QRIH), 306–328 (FQCA…QRTH), 334–356 (YSCP…QGIH), 362–384 (YACK…QRIH), 390–412 (YKCT…RRTH), 418–440 (YQCG…RRTH), 446–468 (YKCG…QGTH), 474–496 (YECL…QRTH), 502–524 (YRCG…QRTH), 530–552 (YKCL…QRAH), 558–580 (YRCP…QRIH), and 586–608 (YRCP…QRTH).

The protein belongs to the krueppel C2H2-type zinc-finger protein family. As to expression, in the adult, predominantly found in spermatids. Also present in the embryo.

It is found in the nucleus. In terms of biological role, may be involved in transcriptional regulation during the post-meiotic stages of spermatogenesis. This is Zinc finger and SCAN domain-containing protein 2 (Zscan2) from Mus musculus (Mouse).